The sequence spans 237 residues: MRPSNRTPAQTRPITITRQFTAHAEGSVLVEFGETKVLCTASFTEGVPRFLKGQGQGWVTAEYGMLPRSTHSRMDREAARGKQSGRTQEIQRLIGRALRACVDMKALGENTIVIDCDVIQADGGTRTASITGACVALVDALNWARGKGIIKSNPLKFLIAAVSVGIYKGEAISDLEYIEDSAAETDMNVVMTETGKIIEIQGTAEGEPFSHEELLELLALAKNSIREIVDVQKAALN.

Phosphate is bound by residues Arg-86 and 124–126; that span reads GTR.

The protein belongs to the RNase PH family. Homohexameric ring arranged as a trimer of dimers.

It carries out the reaction tRNA(n+1) + phosphate = tRNA(n) + a ribonucleoside 5'-diphosphate. Phosphorolytic 3'-5' exoribonuclease that plays an important role in tRNA 3'-end maturation. Removes nucleotide residues following the 3'-CCA terminus of tRNAs; can also add nucleotides to the ends of RNA molecules by using nucleoside diphosphates as substrates, but this may not be physiologically important. Probably plays a role in initiation of 16S rRNA degradation (leading to ribosome degradation) during starvation. In Shewanella baltica (strain OS223), this protein is Ribonuclease PH.